We begin with the raw amino-acid sequence, 107 residues long: Ferredoxin 1 (107 aa).

4Fe-4S ferredoxin-type domains follow at residues 2-30 and 31-60; these read TFVV…YEGP and NFLV…SEDE. [3Fe-4S] cluster contacts are provided by Cys9 and Cys17. Residues Cys21, Cys40, Cys43, and Cys46 each contribute to the [4Fe-4S] cluster site. Cys50 serves as a coordination point for [3Fe-4S] cluster.

The cofactor is [4Fe-4S] cluster. [3Fe-4S] cluster serves as cofactor.

In terms of biological role, ferredoxins are iron-sulfur proteins that transfer electrons in a wide variety of metabolic reactions. This chain is Ferredoxin 1 (fdxA), found in Pseudomonas aeruginosa (strain ATCC 15692 / DSM 22644 / CIP 104116 / JCM 14847 / LMG 12228 / 1C / PRS 101 / PAO1).